Here is a 373-residue protein sequence, read N- to C-terminus: StAR-related lipid transfer protein 7, mitochondrial (373 aa).

The N-terminal 61 residues, Met1–Leu61, are a transit peptide targeting the mitochondrion. Positions Asp89–Ile114 form a coiled coil. Residues Phe115 to Asn330 form the START domain. Disordered regions lie at residues Ser118–Glu141 and Ser347–Ala373.

In terms of processing, proteolytically cleaved by PARL. As to expression, expressed in epithelial cells of airways, peripheral bronchioles and alveoli, as well as in the basal cell layer of the epidermis (at protein level).

It is found in the mitochondrion. Its function is as follows. May play a protective role in mucosal tissues by preventing exaggerated allergic responses. The protein is StAR-related lipid transfer protein 7, mitochondrial (Stard7) of Mus musculus (Mouse).